The following is a 37-amino-acid chain: Large ribosomal subunit protein bL36 (37 aa).

It belongs to the bacterial ribosomal protein bL36 family.

The sequence is that of Large ribosomal subunit protein bL36 from Nostoc sp. (strain PCC 7120 / SAG 25.82 / UTEX 2576).